The following is a 600-amino-acid chain: MLSRVAKLNSRLVSLALLGSQIAFGAITYQHPDDLPSGVDYDFIVAGGGTAGLVVASRLSENSKWNVLVIEAGPSNKDTPETRIPGLADNLPGTRTDWNYTTIPQDALGGRSLNYSRAKVLGGCSTHNGMVYTRGPRDDWNYWAEITDNQALKWDNVLPIMKNTEKFSQDFLDQSMEGHIDPSVHGFDGMLSVVASYTNVSFNNLLLETTRELSDEFPFKLDLNDGKPHGLAWTQYTIDQGAERSSSATSYLESTGDNVHVLVNTHVTRIVSAGNETDFRSVEFAVDANSPKKVLTAKKELILSAGVIASPQILMNSGIGGREELQAIGVDTLIDNPSVGRNLSDQASTLLMFDTTLPNTDYDVAAALTEWDNSRSGPMAYAARLNHLTWVRLPDDKLSGSDPSSGHDSPHIEFQFRQISHQLPPADVPNQVQLPDPDSIGVVLQFSVVNLYSISLGSVTLNNNDPFADPIIDLNMFGDQKDIAILREGVRSARRMFSSQAFKNVVHETVYPPAGVTSDEDLDAFLRTSAVSYLHGVGTLSMSPHSASWGVVNPDFRVKGTTGLRVVDASVIPRAPAGHTQIPVYTFAEHASALIADSYN.

The first 25 residues, 1–25 (MLSRVAKLNSRLVSLALLGSQIAFG), serve as a signal peptide directing secretion. N-linked (GlcNAc...) asparagine glycosylation is found at asparagine 99 and asparagine 114. At histidine 127 the chain carries Tele-8alpha-FAD histidine. Asparagine 199, asparagine 275, and asparagine 342 each carry an N-linked (GlcNAc...) asparagine glycan. Histidine 535 (proton acceptor) is an active-site residue. The active site involves histidine 579.

This sequence belongs to the GMC oxidoreductase family. As to quaternary structure, monomer. FAD serves as cofactor. Post-translationally, N-glycosylated.

The protein localises to the secreted. The enzyme catalyses pyranose + acceptor = pyranos-2-ulose + reduced acceptor.. It catalyses the reaction pyranose + acceptor = pyranos-3-ulose + reduced acceptor.. The catalysed reaction is pyranose + acceptor = pyranos-2,3-diulose + reduced acceptor.. It carries out the reaction a pyranoside + acceptor = a pyranosid-3-ulose + reduced acceptor.. The enzyme catalyses a pyranoside + acceptor = a pyranosid-3,4-diulose + reduced acceptor.. Its function is as follows. Catalyzes the single-oxidation or sequential double oxidation reaction of carbohydrates primarily at carbon-2 and/or carbon-3 with the concomitant reduction of the flavin. The enzyme exhibits a broad sugar substrate specificity, oxidizing different aldopyranoses to the corresponding C-1, C-2, C-3 or C-1,2, C-2,3 and C-3,4 (di)dehydro sugars with substrate-specific regioselectivity. Accepts only a narrow range of electron acceptors such as substituted benzoquinones and complexed metal ions and reacts extremely slowly with O(2) as acceptor. May play a role in the natural recycling of plant matter by oxidizing all major monosaccharides in lignocellulose and by reducing quinone compounds or reactive radical species generated during lignin depolymerization. In Leucoagaricus meleagris (Western flat-topped agaric), this protein is Pyranose dehydrogenase 2.